A 140-amino-acid polypeptide reads, in one-letter code: Putative pre-16S rRNA nuclease (140 aa).

This sequence belongs to the YqgF nuclease family.

Its subcellular location is the cytoplasm. Functionally, could be a nuclease involved in processing of the 5'-end of pre-16S rRNA. The sequence is that of Putative pre-16S rRNA nuclease from Chlorobium chlorochromatii (strain CaD3).